The primary structure comprises 102 residues: Virulence plasmid protein pGP4-D (102 aa).

This chain is Virulence plasmid protein pGP4-D, found in Chlamydia trachomatis serovar L2 (strain ATCC VR-902B / DSM 19102 / 434/Bu).